A 369-amino-acid polypeptide reads, in one-letter code: MWPLWPLAALLALSQALPFEQKAFWDFTLDDGLPMLNDEEASGAETTSGIPDLDSLPPTYSAMCPFGCHCHLRVVQCSDLGLKAVPKEISPDTTLLDLQNNDISELRKDDFKGLQHLYALVLVNNKISKIHEKAFSPLRKLQKLYISKNHLVEIPPNLPSSLVELRIHDNRIRKVPKGVFSGLRNMNCIEMGGNPLENSGFEPGAFDGLKLNYLRISEAKLTGIPKDLPETLNELHLDHNKIQAIELEDLLRYSKLYRLGLGHNQIRMIENGSLSFLPTLRELHLDNNKLSRVPAGLPDLKLLQVVYLHTNNITKVGVNDFCPVGFGVKRAYYNGISLFNNPVPYWEVQPATFRCVTDRLAIQFGNYKK.

Positions 1–16 are cleaved as a signal peptide; sequence MWPLWPLAALLALSQA. A propeptide spanning residues 17 to 37 is cleaved from the precursor; the sequence is LPFEQKAFWDFTLDDGLPMLN. O-linked (Xyl...) (glycosaminoglycan) serine glycans are attached at residues S42 and S48. Disulfide bonds link C64–C70 and C68–C77. LRR repeat units follow at residues 83–103, 104–127, 128–151, 152–172, 173–196, 197–221, 222–242, 243–266, 267–290, 291–313, 314–343, and 344–369; these read KAVPKEISPDTTLLDLQNNDI, SELRKDDFKGLQHLYALVLVNNKI, SKIHEKAFSPLRKLQKLYISKNHL, VEIPPNLPSSLVELRIHDNRI, RKVPKGVFSGLRNMNCIEMGGNPL, ENSGFEPGAFDGLKLNYLRISEAKL, TGIPKDLPETLNELHLDHNKI, QAIELEDLLRYSKLYRLGLGHNQI, RMIENGSLSFLPTLRELHLDNNKL, SRVPAGLPDLKLLQVVYLHTNNI, TKVGVNDFCPVGFGVKRAYYNGISLFNNPV, and PYWEVQPATFRCVTDRLAIQFGNYKK. Residues S181 and S199 are each glycosylated (O-linked (Xyl...) (glycosaminoglycan) serine). 2 N-linked (GlcNAc...) asparagine glycosylation sites follow: N271 and N312. A disulfide bond links C322 and C355.

It belongs to the small leucine-rich proteoglycan (SLRP) family. SLRP class I subfamily. As to quaternary structure, homodimer. Forms a ternary complex with MFAP2 and ELN. In terms of processing, the two attached glycosaminoglycan chains can be either chondroitin sulfate or dermatan sulfate. Found in several connective tissues, especially in articular cartilages.

The protein resides in the secreted. It is found in the extracellular space. The protein localises to the extracellular matrix. Functionally, may be involved in collagen fiber assembly. The chain is Biglycan (BGN) from Bos taurus (Bovine).